A 295-amino-acid polypeptide reads, in one-letter code: Probable aspartoacylase (295 aa).

Zn(2+) contacts are provided by histidine 13 and glutamate 16. Substrate contacts are provided by residues arginine 54 and 61-62; that span reads NR. Residue histidine 100 coordinates Zn(2+). Residues glutamate 158 and tyrosine 268 each coordinate substrate.

The protein belongs to the AspA/AstE family. Aspartoacylase subfamily. The cofactor is Zn(2+).

The enzyme catalyses an N-acyl-L-aspartate + H2O = a carboxylate + L-aspartate. The chain is Probable aspartoacylase from Prochlorococcus marinus subsp. pastoris (strain CCMP1986 / NIES-2087 / MED4).